The sequence spans 525 residues: Glucans biosynthesis protein G (525 aa).

An N-terminal signal peptide occupies residues 1–35 (MIFRSVSNTDFRARVRTLLLAGSTALAFVAAPVWA).

This sequence belongs to the OpgD/OpgG family.

The protein resides in the periplasm. The protein operates within glycan metabolism; osmoregulated periplasmic glucan (OPG) biosynthesis. Involved in the biosynthesis of osmoregulated periplasmic glucans (OPGs). This is Glucans biosynthesis protein G from Pseudomonas paraeruginosa (strain DSM 24068 / PA7) (Pseudomonas aeruginosa (strain PA7)).